Here is a 622-residue protein sequence, read N- to C-terminus: Membrane protein insertase YidC (622 aa).

The helical transmembrane segment at 6-26 (FIAVVLSVLVLVGASFLQELL) threads the bilayer. Residues 37–71 (AEHTLSAVPEETRTQSAHGGAADTQETTQPAAHPS) are disordered. 4 helical membrane passes run 413 to 433 (LIPN…VLFF), 483 to 503 (LSGC…YRLF), 513 to 533 (MFIP…TLPF), and 579 to 599 (VMPL…LVYW).

This sequence belongs to the OXA1/ALB3/YidC family. Type 1 subfamily. In terms of assembly, interacts with the Sec translocase complex via SecD. Specifically interacts with transmembrane segments of nascent integral membrane proteins during membrane integration.

The protein localises to the cell inner membrane. Functionally, required for the insertion and/or proper folding and/or complex formation of integral membrane proteins into the membrane. Involved in integration of membrane proteins that insert both dependently and independently of the Sec translocase complex, as well as at least some lipoproteins. Aids folding of multispanning membrane proteins. This is Membrane protein insertase YidC from Treponema pallidum (strain Nichols).